The chain runs to 267 residues: L-aspartate dehydrogenase 2 (267 aa).

The NAD(+) site is built by Ala123 and Asn189. His219 is a catalytic residue.

Belongs to the L-aspartate dehydrogenase family.

It catalyses the reaction L-aspartate + NADP(+) + H2O = oxaloacetate + NH4(+) + NADPH + H(+). The enzyme catalyses L-aspartate + NAD(+) + H2O = oxaloacetate + NH4(+) + NADH + H(+). Its pathway is cofactor biosynthesis; NAD(+) biosynthesis; iminoaspartate from L-aspartate (dehydrogenase route): step 1/1. Functionally, specifically catalyzes the NAD or NADP-dependent dehydrogenation of L-aspartate to iminoaspartate. The polypeptide is L-aspartate dehydrogenase 2 (Bordetella bronchiseptica (strain ATCC BAA-588 / NCTC 13252 / RB50) (Alcaligenes bronchisepticus)).